We begin with the raw amino-acid sequence, 1543 residues long: ATP-binding cassette sub-family A member 10 (1543 aa).

7 helical membrane passes run 83–103 (YWLKGFVAFQAAINAAIIEVT), 135–155 (WFHFTCLVSFSSFIYFASLNV), 185–205 (ICFIFIMSIFMALVITSIPIV), 210–230 (FMVIFTLYSLYGLSLIALAFL), 240–260 (LAGLAGFLFTVFWGCLGFTVL), 264–284 (LPLSLGWVLSLLSPFAFTAGM), and 310–330 (IATFFILAFDTLFYLIFTLYF). The ABC transporter 1 domain occupies 391–626 (IRIRNVIKEY…WGIGYHLSLH (236 aa)). 427–434 (GHNGAGKS) is an ATP binding site. 8 helical membrane-spanning segments follow: residues 774 to 794 (LLCLLLVLGIAFIPIILEKIM), 890 to 910 (LNCFPVLMGIVSNALMGIFNF), 926 to 946 (IVLDLGFIDGSIFLLLITNCV), 985 to 1005 (IPLYFLILFSIHLIYYFIFLG), 1014 to 1034 (FVLVVCIIGCAVSLIFLTYVL), 1046 to 1066 (GFWSFGFFIILICVSTIMVST), 1073 to 1093 (LILCMIFIPSFTLLGYVMLLI), and 1113 to 1133 (KTILLTTLIPYLQSVIFLFVI). Over residues 1153–1164 (ISPRSRETHPNP) the composition is skewed to basic and acidic residues. A disordered region spans residues 1153 to 1177 (ISPRSRETHPNPEEPEEEDEDVQAE). The span at 1165–1174 (EEPEEEDEDV) shows a compositional bias: acidic residues. The ABC transporter 2 domain maps to 1206-1440 (YETKKSCFST…FGRDYLLEIK (235 aa)). 1239–1246 (GHNGAGKS) provides a ligand contact to ATP.

Belongs to the ABC transporter superfamily. ABCA family. In terms of tissue distribution, widely expressed. Highly expressed in skeletal muscle, heart, brain and gastrointestinal tract.

It is found in the membrane. In terms of biological role, probable transporter which may play a role in macrophage lipid transport and homeostasis. The chain is ATP-binding cassette sub-family A member 10 (ABCA10) from Homo sapiens (Human).